The primary structure comprises 554 residues: MSSSIPPRLYDMSPTESKKQEDVSETELVYPVELADATIQPSKSDDDLFDSNDFSKTYLAKSRILSNAMNEIGFGRYQWYLFFVAGFGWMSDNIWPVCTSLILMRLDEVDGPHPPAEGRAPYLTLSQNLGLLVGAMVWSLSADTIGRRWAFNLTFLFTGVFAVIAGASPNFASICVFDALWSFGVGGNLPVDSAIFLEALPSSHQWLLTVMSFWWAIGQVIANLVSWGLISNFSCPDDESVCHRADNKGWRYFLFTMGGMTLLMFAARFLVSVYESPKFYLAKGDDYKAVETIHKIARINGKTCTLTVEELYAIDRQEQEESDLDDSKSSDAKSVTQGTTNLIVEKLRKYNFEHIRQCFGSRKLAISSILVILSWAVIGLAFPLYNAFLPYYLETRGNANEPLSVAKTYRNSLIVSAIGVPGSLIAGVLVEFRIGRKGTLCLSLILTGVFLFASTTAKTSNAYLGWNCTFSFFSDIMYGVLYAYTPEVFPSKVRGTAVGLAASANRILGIFSPVIAMRANLTTSAPIFVSGALFIFAGILVVFFPYEPRGKSSF.

The segment at 1 to 25 (MSSSIPPRLYDMSPTESKKQEDVSE) is disordered. Phosphoserine is present on S13. 6 helical membrane passes run 82–102 (FFVA…TSLI), 120–140 (APYL…VWSL), 149–169 (WAFN…GASP), 171–191 (FASI…NLPV), 210–230 (VMSF…WGLI), and 253–273 (FLFT…LVSV). S334 is modified (phosphoserine). A run of 6 helical transmembrane segments spans residues 364 to 384 (LAIS…AFPL), 412 to 432 (SLIV…LVEF), 437 to 457 (KGTL…STTA), 462 to 482 (AYLG…GVLY), 497 to 517 (AVGL…VIAM), and 525 to 545 (APIF…VFFP).

It belongs to the major facilitator superfamily.

It is found in the endoplasmic reticulum. The protein localises to the membrane. This is an uncharacterized protein from Schizosaccharomyces pombe (strain 972 / ATCC 24843) (Fission yeast).